The chain runs to 239 residues: MATPHINAEMGDFADVVLMPGDPLRAKHIAETFLENVREVNNVRGMLGFTGTYKGRKISVMGHGMGIPSCSIYTKELITDFGVKKIIRVGSCGAVRMDVKLRDVVIGMGACTDSKVNRIRFKDHDFAAIADFDMVRNAVDAAKALGVDARVGNLFSADLFYSPDGEMFDVMEKYGVLGVEMEAAGIYGVAAEFGAKALTICTVSDHIRTHEQTTAAERQTTFNDMIKIALESVLLGDKE.

Histidine 5 is an a purine D-ribonucleoside binding site. Phosphate-binding positions include glycine 21, arginine 25, arginine 44, and 88–91; that span reads RVGS. Residues 180 to 182 and 204 to 205 contribute to the a purine D-ribonucleoside site; these read EME and SD. Residue aspartate 205 is the Proton donor of the active site.

The protein belongs to the PNP/UDP phosphorylase family. Homohexamer; trimer of homodimers.

It catalyses the reaction a purine D-ribonucleoside + phosphate = a purine nucleobase + alpha-D-ribose 1-phosphate. It carries out the reaction a purine 2'-deoxy-D-ribonucleoside + phosphate = a purine nucleobase + 2-deoxy-alpha-D-ribose 1-phosphate. In terms of biological role, catalyzes the reversible phosphorolytic breakdown of the N-glycosidic bond in the beta-(deoxy)ribonucleoside molecules, with the formation of the corresponding free purine bases and pentose-1-phosphate. This Salmonella heidelberg (strain SL476) protein is Purine nucleoside phosphorylase DeoD-type.